The sequence spans 478 residues: Aspartyl/glutamyl-tRNA(Asn/Gln) amidotransferase subunit B (478 aa).

The protein belongs to the GatB/GatE family. GatB subfamily. As to quaternary structure, heterotrimer of A, B and C subunits.

The enzyme catalyses L-glutamyl-tRNA(Gln) + L-glutamine + ATP + H2O = L-glutaminyl-tRNA(Gln) + L-glutamate + ADP + phosphate + H(+). The catalysed reaction is L-aspartyl-tRNA(Asn) + L-glutamine + ATP + H2O = L-asparaginyl-tRNA(Asn) + L-glutamate + ADP + phosphate + 2 H(+). Its function is as follows. Allows the formation of correctly charged Asn-tRNA(Asn) or Gln-tRNA(Gln) through the transamidation of misacylated Asp-tRNA(Asn) or Glu-tRNA(Gln) in organisms which lack either or both of asparaginyl-tRNA or glutaminyl-tRNA synthetases. The reaction takes place in the presence of glutamine and ATP through an activated phospho-Asp-tRNA(Asn) or phospho-Glu-tRNA(Gln). The sequence is that of Aspartyl/glutamyl-tRNA(Asn/Gln) amidotransferase subunit B from Lachnoclostridium phytofermentans (strain ATCC 700394 / DSM 18823 / ISDg) (Clostridium phytofermentans).